The chain runs to 316 residues: 2,3-dihydroxyphenylpropionate/2,3-dihydroxicinnamic acid 1,2-dioxygenase (316 aa).

Histidine 115 functions as the Proton donor in the catalytic mechanism. The active-site Proton acceptor is histidine 179.

The protein belongs to the LigB/MhpB extradiol dioxygenase family. Homotetramer. It depends on Fe(2+) as a cofactor.

The enzyme catalyses 3-(2,3-dihydroxyphenyl)propanoate + O2 = (2Z,4E)-2-hydroxy-6-oxonona-2,4-dienedioate + H(+). It carries out the reaction (2E)-3-(2,3-dihydroxyphenyl)prop-2-enoate + O2 = (2Z,4E,7E)-2-hydroxy-6-oxonona-2,4,7-trienedioate + H(+). It functions in the pathway aromatic compound metabolism; 3-phenylpropanoate degradation. Functionally, catalyzes the non-heme iron(II)-dependent oxidative cleavage of 2,3-dihydroxyphenylpropionic acid and 2,3-dihydroxicinnamic acid into 2-hydroxy-6-ketononadienedioate and 2-hydroxy-6-ketononatrienedioate, respectively. This Paraburkholderia xenovorans (strain LB400) protein is 2,3-dihydroxyphenylpropionate/2,3-dihydroxicinnamic acid 1,2-dioxygenase.